A 260-amino-acid chain; its full sequence is 23S rRNA (guanosine-2'-O-)-methyltransferase RlmB (260 aa).

Residues Gly-197, Ile-217, and Leu-226 each coordinate S-adenosyl-L-methionine.

The protein belongs to the class IV-like SAM-binding methyltransferase superfamily. RNA methyltransferase TrmH family. RlmB subfamily.

The protein localises to the cytoplasm. The catalysed reaction is guanosine(2251) in 23S rRNA + S-adenosyl-L-methionine = 2'-O-methylguanosine(2251) in 23S rRNA + S-adenosyl-L-homocysteine + H(+). Its function is as follows. Specifically methylates the ribose of guanosine 2251 in 23S rRNA. The chain is 23S rRNA (guanosine-2'-O-)-methyltransferase RlmB from Nitrosomonas europaea (strain ATCC 19718 / CIP 103999 / KCTC 2705 / NBRC 14298).